Consider the following 264-residue polypeptide: Hydroxyethylthiazole kinase (264 aa).

M52 contributes to the substrate binding site. Residues R127 and T173 each coordinate ATP. G200 contributes to the substrate binding site.

The protein belongs to the Thz kinase family. Requires Mg(2+) as cofactor.

It catalyses the reaction 5-(2-hydroxyethyl)-4-methylthiazole + ATP = 4-methyl-5-(2-phosphooxyethyl)-thiazole + ADP + H(+). It participates in cofactor biosynthesis; thiamine diphosphate biosynthesis; 4-methyl-5-(2-phosphoethyl)-thiazole from 5-(2-hydroxyethyl)-4-methylthiazole: step 1/1. Its function is as follows. Catalyzes the phosphorylation of the hydroxyl group of 4-methyl-5-beta-hydroxyethylthiazole (THZ). The protein is Hydroxyethylthiazole kinase of Pectobacterium carotovorum subsp. carotovorum (strain PC1).